Consider the following 85-residue polypeptide: Conotoxin Cap15b (85 aa).

The first 23 residues, 1–23, serve as a signal peptide directing secretion; sequence MEKLTFLILVATVLLTIHVLVQS. Residues 24–49 constitute a propeptide that is removed on maturation; sequence DGDKHLKRRPKQYATKRLSALMRGHR. Q50 is modified (pyrrolidone carboxylic acid).

The protein belongs to the conotoxin O2 superfamily. In terms of processing, contains 4 disulfide bonds. As to expression, expressed by the venom duct.

The protein resides in the secreted. This chain is Conotoxin Cap15b, found in Conus capitaneus (Captain cone).